A 275-amino-acid chain; its full sequence is Protein FAM210A (275 aa).

The interval 51–100 (KWLHSQPKQQDTATKTPVHDLPSGIQHQSEETSPSARSSISTDPSSIAEE) is disordered. 2 stretches are compositionally biased toward polar residues: residues 56–65 (QPKQQDTATK) and 75–95 (IQHQ…TDPS). In terms of domain architecture, DUF1279 spans 105 to 217 (DQSIGLLKRF…GYLSTPPLVK (113 aa)). Residues 124–144 (VLIPVHLVTSSIWFGSFYYAA) form a helical membrane-spanning segment. Residues 221-275 (QDRMEETKELFTEKMEETRDIISGKMEETKDRISEKLQETKDRVAFRKKKNEDME) adopt a coiled-coil conformation.

The protein belongs to the FAM210 family.

The protein localises to the membrane. The protein resides in the mitochondrion. It is found in the cytoplasm. Functionally, may play a role in the structure and strength of both muscle and bone. The protein is Protein FAM210A (fam210a) of Xenopus laevis (African clawed frog).